We begin with the raw amino-acid sequence, 1217 residues long: Sterol 3-beta-glucosyltransferase (1217 aa).

Residues 195–232 (EFVRKYFGISEEETLIGHYTGWLLQEVLIQGNLFITNS) enclose the GRAM 1 domain. The PH domain maps to 246 to 343 (AVVLCGKLKL…WVKCLKKQLF (98 aa)). Residues 590-656 (AKIKDWFNLH…EDIEGYNEIL (67 aa)) form the GRAM 2 domain. Ser-766, Arg-767, Asp-769, Asn-1042, Ile-1072, His-1074, His-1087, Ser-1090, Gly-1091, Thr-1092, Asp-1111, and Gln-1112 together coordinate UDP-alpha-D-glucose.

This sequence belongs to the glycosyltransferase 28 family.

The protein localises to the cytoplasm. It localises to the membrane. The catalysed reaction is a sterol + UDP-alpha-D-glucose = a sterol 3-beta-D-glucoside + UDP + H(+). The enzyme catalyses ergosterol + UDP-alpha-D-glucose = ergosteryl 3-beta-D-glucoside + UDP + H(+). Functionally, sterol glycosyltransferase responsible for the glycosylation of ergosterol to form ergosterol-glucoside. This chain is Sterol 3-beta-glucosyltransferase, found in Vanderwaltozyma polyspora (strain ATCC 22028 / DSM 70294 / BCRC 21397 / CBS 2163 / NBRC 10782 / NRRL Y-8283 / UCD 57-17) (Kluyveromyces polysporus).